We begin with the raw amino-acid sequence, 188 residues long: Elongation factor P (188 aa).

This sequence belongs to the elongation factor P family.

Its subcellular location is the cytoplasm. It participates in protein biosynthesis; polypeptide chain elongation. In terms of biological role, involved in peptide bond synthesis. Stimulates efficient translation and peptide-bond synthesis on native or reconstituted 70S ribosomes in vitro. Probably functions indirectly by altering the affinity of the ribosome for aminoacyl-tRNA, thus increasing their reactivity as acceptors for peptidyl transferase. In Azotobacter vinelandii (strain DJ / ATCC BAA-1303), this protein is Elongation factor P.